A 517-amino-acid chain; its full sequence is Succinyl-CoA:3-ketoacid coenzyme A transferase 2, mitochondrial (517 aa).

A mitochondrion-targeting transit peptide spans Met1–Arg39. The 5-glutamyl coenzyme A thioester intermediate role is filled by Glu341.

This sequence belongs to the 3-oxoacid CoA-transferase family. In terms of assembly, homodimer. As to expression, testis specific.

The protein localises to the mitochondrion. It catalyses the reaction a 3-oxo acid + succinyl-CoA = a 3-oxoacyl-CoA + succinate. The protein operates within ketone metabolism; succinyl-CoA degradation; acetoacetyl-CoA from succinyl-CoA: step 1/1. Its function is as follows. Key enzyme for ketone body catabolism. Transfers the CoA moiety from succinate to acetoacetate. Formation of the enzyme-CoA intermediate proceeds via an unstable anhydride species formed between the carboxylate groups of the enzyme and substrate. The polypeptide is Succinyl-CoA:3-ketoacid coenzyme A transferase 2, mitochondrial (OXCT2) (Homo sapiens (Human)).